Reading from the N-terminus, the 351-residue chain is HGYVDQVTIGGQVYTGYQPYQDPYESPVPQRIERAIPGNGPVEDLTLLDIQCNGSGGSGTKPAALIASAAAGDEIAFHWTTWPSSHVGPVITYMGKVPSNTDITSYSPTGSDVIWFKIDEAGYENGKWAATDIMSAQNSTWTVTIPKALAPGQYIVRHEIIALHQAETYPGAQFYPDCFQVQVTGPGTETPTSQALVSFPGGYTPTTPGITFNVYSGSITSYPIPGPPVWTSNEAFSGGSSSSAAASSTAVASSTADSSSSAAATQSSSAAASGSAAPSSSAIGTSTASSAAASGTAIVDANTCMNNYNKCIDAGQPDPDWSGCTATKDACLAGATYQRLARSGTLGRLSF.

H1 provides a ligand contact to Cu(2+). A disulfide bridge links C52 with C178. N53 carries an N-linked (GlcNAc...) asparagine glycan. Residue H86 coordinates Cu(2+). A glycan (N-linked (GlcNAc...) asparagine) is linked at N138. Residues H164 and Q173 each contribute to the O2 site. Y175 lines the Cu(2+) pocket. S280 is lipidated: GPI-anchor amidated serine. The propeptide at 281 to 351 is removed in mature form; sequence SAIGTSTASS…RSGTLGRLSF (71 aa).

The protein belongs to the polysaccharide monooxygenase AA9 family. Cu(2+) is required as a cofactor.

The protein resides in the cell membrane. The catalysed reaction is [(1-&gt;4)-beta-D-glucosyl]n+m + reduced acceptor + O2 = 4-dehydro-beta-D-glucosyl-[(1-&gt;4)-beta-D-glucosyl]n-1 + [(1-&gt;4)-beta-D-glucosyl]m + acceptor + H2O.. Lytic polysaccharide monooxygenase (LPMO) that depolymerizes crystalline and amorphous polysaccharides via the oxidation of scissile alpha- or beta-(1-4)-glycosidic bonds, yielding C1 or C4 oxidation products. Catalysis by LPMOs requires the reduction of the active-site copper from Cu(II) to Cu(I) by a reducing agent and H(2)O(2) or O(2) as a cosubstrate. In terms of biological role, has broad specificity, cleaving at any position along the beta-glucan backbone of xyloglucan, regardless of substitutions. Shows minor activity on glucomannan. In Gloeophyllum trabeum (Brown rot fungus), this protein is AA9 family lytic polysaccharide monooxygenase A.